Consider the following 210-residue polypeptide: Leucyl/phenylalanyl-tRNA--protein transferase (210 aa).

The protein belongs to the L/F-transferase family.

Its subcellular location is the cytoplasm. It carries out the reaction N-terminal L-lysyl-[protein] + L-leucyl-tRNA(Leu) = N-terminal L-leucyl-L-lysyl-[protein] + tRNA(Leu) + H(+). The catalysed reaction is N-terminal L-arginyl-[protein] + L-leucyl-tRNA(Leu) = N-terminal L-leucyl-L-arginyl-[protein] + tRNA(Leu) + H(+). The enzyme catalyses L-phenylalanyl-tRNA(Phe) + an N-terminal L-alpha-aminoacyl-[protein] = an N-terminal L-phenylalanyl-L-alpha-aminoacyl-[protein] + tRNA(Phe). Functions in the N-end rule pathway of protein degradation where it conjugates Leu, Phe and, less efficiently, Met from aminoacyl-tRNAs to the N-termini of proteins containing an N-terminal arginine or lysine. The sequence is that of Leucyl/phenylalanyl-tRNA--protein transferase from Deinococcus radiodurans (strain ATCC 13939 / DSM 20539 / JCM 16871 / CCUG 27074 / LMG 4051 / NBRC 15346 / NCIMB 9279 / VKM B-1422 / R1).